The chain runs to 405 residues: Obg-like ATPase homolog (405 aa).

In terms of domain architecture, OBG-type G spans 17 to 283 (PTSGIVGLAN…CKGIASEYFD (267 aa)). ATP-binding positions include 26-31 (NVGKST) and V231. A TGS domain is found at 312 to 398 (NLISFFTCGP…QDNDIALFKA (87 aa)).

The protein belongs to the TRAFAC class OBG-HflX-like GTPase superfamily. OBG GTPase family.

Its subcellular location is the mitochondrion. In terms of biological role, hydrolyzes ATP, and can also hydrolyze GTP with lower efficiency. Has lower affinity for GTP. This Saccharomyces cerevisiae (strain ATCC 204508 / S288c) (Baker's yeast) protein is Obg-like ATPase homolog (YLF2).